The primary structure comprises 322 residues: Basic 30 kDa endochitinase (322 aa).

The N-terminal stretch at 1–22 is a signal peptide; sequence MRLSEFTTLFLLFSVLLLSASA. A Chitin-binding type-1 domain is found at 23–64; that stretch reads EQCGSQAGGALCASGLCCSKFGWCGNTNEYCGPGNCQSQCPG. Intrachain disulfides connect C25/C40, C34/C46, C39/C53, and C58/C62. A 4-hydroxyproline mark is found at P66 and P68. Disulfide bonds link C93–C156, C168–C176, and C275–C307. The Proton donor role is filled by E138. A propeptide spans 316 to 322 (removed in mature form); sequence GLLVDIM.

The protein belongs to the glycosyl hydrolase 19 family. Chitinase class I subfamily. Post-translationally, the 4-hydroxyproline residues are not glycosylated in this plant vacuolar protein.

It localises to the vacuole. It is found in the secreted. The protein localises to the cell wall. The catalysed reaction is Random endo-hydrolysis of N-acetyl-beta-D-glucosaminide (1-&gt;4)-beta-linkages in chitin and chitodextrins.. Defense against chitin-containing fungal pathogens. This chain is Basic 30 kDa endochitinase (CHI9), found in Solanum lycopersicum (Tomato).